Consider the following 404-residue polypeptide: Alanyl-tRNA editing protein AlaX-L (404 aa).

Zn(2+) contacts are provided by histidine 104, histidine 108, cysteine 202, and histidine 206.

The protein belongs to the class-II aminoacyl-tRNA synthetase family. Editing domain AlaX-L subfamily. Zn(2+) is required as a cofactor.

It is found in the cytoplasm. Its function is as follows. Functions in trans to edit the amino acid moiety from mischarged charged tRNA(Ala). This is Alanyl-tRNA editing protein AlaX-L (alaXL) from Pyrococcus horikoshii (strain ATCC 700860 / DSM 12428 / JCM 9974 / NBRC 100139 / OT-3).